The chain runs to 123 residues: Small ribosomal subunit protein uS12 (123 aa).

Asp-89 carries the post-translational modification 3-methylthioaspartic acid.

This sequence belongs to the universal ribosomal protein uS12 family. As to quaternary structure, part of the 30S ribosomal subunit. Contacts proteins S8 and S17. May interact with IF1 in the 30S initiation complex.

In terms of biological role, with S4 and S5 plays an important role in translational accuracy. Functionally, interacts with and stabilizes bases of the 16S rRNA that are involved in tRNA selection in the A site and with the mRNA backbone. Located at the interface of the 30S and 50S subunits, it traverses the body of the 30S subunit contacting proteins on the other side and probably holding the rRNA structure together. The combined cluster of proteins S8, S12 and S17 appears to hold together the shoulder and platform of the 30S subunit. This Rhodopseudomonas palustris (strain BisB18) protein is Small ribosomal subunit protein uS12.